Reading from the N-terminus, the 243-residue chain is Ribonuclease 3 (243 aa).

The RNase III domain maps to 19-144 (FNTLHKLLGF…LVGAIYLDRG (126 aa)). Glu-61 lines the Mg(2+) pocket. Asp-65 is a catalytic residue. Mg(2+)-binding residues include Asn-130 and Glu-133. Glu-133 is a catalytic residue. The DRBM domain occupies 172 to 240 (SYKSLLIEWC…SKRAYYALQN (69 aa)).

It belongs to the ribonuclease III family. In terms of assembly, homodimer. It depends on Mg(2+) as a cofactor.

Its subcellular location is the cytoplasm. The enzyme catalyses Endonucleolytic cleavage to 5'-phosphomonoester.. Digests double-stranded RNA. Involved in the processing of primary rRNA transcript to yield the immediate precursors to the large and small rRNAs (23S and 16S). Processes some mRNAs, and tRNAs when they are encoded in the rRNA operon. Processes pre-crRNA and tracrRNA of type II CRISPR loci if present in the organism. This chain is Ribonuclease 3 (rnc), found in Zunongwangia profunda (strain DSM 18752 / CCTCC AB 206139 / SM-A87) (Wangia profunda).